Here is a 179-residue protein sequence, read N- to C-terminus: Adenine phosphoribosyltransferase (179 aa).

Belongs to the purine/pyrimidine phosphoribosyltransferase family. Homodimer.

The protein resides in the cytoplasm. It carries out the reaction AMP + diphosphate = 5-phospho-alpha-D-ribose 1-diphosphate + adenine. It functions in the pathway purine metabolism; AMP biosynthesis via salvage pathway; AMP from adenine: step 1/1. Functionally, catalyzes a salvage reaction resulting in the formation of AMP, that is energically less costly than de novo synthesis. The chain is Adenine phosphoribosyltransferase from Bradyrhizobium sp. (strain BTAi1 / ATCC BAA-1182).